The primary structure comprises 551 residues: Membrane protein insertase YidC (551 aa).

Residues 3 to 23 (ANHIRILLLVTIAIMFISLMG) form a helical membrane-spanning segment. A disordered region spans residues 33–55 (NTKQQTSATQNNSHYDNADSSTN). 3 helical membrane passes run 361-381 (LVGN…LIFY), 431-451 (LSGC…YWVL), and 504-524 (VMMF…SGLV).

It belongs to the OXA1/ALB3/YidC family. Type 1 subfamily. In terms of assembly, interacts with the Sec translocase complex via SecD. Specifically interacts with transmembrane segments of nascent integral membrane proteins during membrane integration.

It is found in the cell inner membrane. Required for the insertion and/or proper folding and/or complex formation of integral membrane proteins into the membrane. Involved in integration of membrane proteins that insert both dependently and independently of the Sec translocase complex, as well as at least some lipoproteins. Aids folding of multispanning membrane proteins. This is Membrane protein insertase YidC from Francisella tularensis subsp. holarctica (strain OSU18).